A 283-amino-acid polypeptide reads, in one-letter code: Homeobox protein BarH-like 2 (283 aa).

Disordered regions lie at residues 107 to 141 and 198 to 283; these read AAAA…RRSR and KGGQ…PPLS. Over residues 122 to 132 the composition is skewed to polar residues; that stretch reads SSESETEQPTP. The segment at residues 139-198 is a DNA-binding region (homeobox); the sequence is RSRTIFTELQLMGLEKKFQKQKYLSTPDRLDLAQSLGLTQLQVKTWYQNRRMKWKKMVLK. Low complexity predominate over residues 268 to 277; the sequence is QPQELSEASS.

Belongs to the BAR homeobox family. As to expression, nervous system, particularly in the telencephalon, spinal cord, and dorsal root ganglia.

Its subcellular location is the nucleus. In terms of biological role, transcription factor. Binds optimally to the DNA consensus sequence 5'-YYTAATGRTTTTY-3'. May control the expression of neural adhesion molecules such as L1 or Ng-CAM during embryonic development of both the central and peripherical nervous system. May be involved in controlling adhesive processes in keratinizing epithelia. The sequence is that of Homeobox protein BarH-like 2 (Barx2) from Mus musculus (Mouse).